The following is a 341-amino-acid chain: Glucokinase (341 aa).

7 to 12 (GDIGGT) lines the ATP pocket.

It belongs to the bacterial glucokinase family.

The protein resides in the cytoplasm. It carries out the reaction D-glucose + ATP = D-glucose 6-phosphate + ADP + H(+). In Nostoc punctiforme (strain ATCC 29133 / PCC 73102), this protein is Glucokinase.